The chain runs to 132 residues: Proline-rich protein sgp2 (132 aa).

The signal sequence occupies residues 1–20 (MKYCFVFFVTLICLIANCSA). Disordered regions lie at residues 23 to 62 (EGDK…SNSR) and 87 to 132 (GASV…LGLP). Over residues 36–47 (KQIERASDKTSE) the composition is skewed to basic and acidic residues. The segment covering 51-62 (GNTNAQGDSNSR) has biased composition (polar residues). The segment covering 91–105 (PQLPDLPTTPSLPDM) has biased composition (low complexity).

It localises to the secreted. The polypeptide is Proline-rich protein sgp2 (sgp2) (Glossina morsitans morsitans (Savannah tsetse fly)).